The following is a 110-amino-acid chain: uncharacterized protein (110 aa).

3 consecutive transmembrane segments (helical) span residues 4 to 26 (LVGG…KSIN), 46 to 68 (ANRY…GLLL), and 72 to 91 (LFIL…FMLT).

The protein localises to the cell membrane. This is an uncharacterized protein from Bacillus subtilis (strain 168).